We begin with the raw amino-acid sequence, 93 residues long: Large ribosomal subunit protein bL31B (93 aa).

This sequence belongs to the bacterial ribosomal protein bL31 family. Type B subfamily. Part of the 50S ribosomal subunit.

This chain is Large ribosomal subunit protein bL31B, found in Psychrobacter arcticus (strain DSM 17307 / VKM B-2377 / 273-4).